A 968-amino-acid polypeptide reads, in one-letter code: RNA polymerase-associated protein RapA (968 aa).

A Helicase ATP-binding domain is found at 164-334 (DVGRRHAPRV…FARLRLLDPN (171 aa)). 177–184 (DEVGLGKT) lines the ATP pocket. A DEAH box motif is present at residues 280 to 283 (DEAH). The region spanning 490–662 (RVEWLMGYLT…YLAAPENTEG (173 aa)) is the Helicase C-terminal domain.

This sequence belongs to the SNF2/RAD54 helicase family. RapA subfamily. In terms of assembly, interacts with the RNAP. Has a higher affinity for the core RNAP than for the holoenzyme. Its ATPase activity is stimulated by binding to RNAP.

Functionally, transcription regulator that activates transcription by stimulating RNA polymerase (RNAP) recycling in case of stress conditions such as supercoiled DNA or high salt concentrations. Probably acts by releasing the RNAP, when it is trapped or immobilized on tightly supercoiled DNA. Does not activate transcription on linear DNA. Probably not involved in DNA repair. The protein is RNA polymerase-associated protein RapA of Cronobacter sakazakii (strain ATCC BAA-894) (Enterobacter sakazakii).